A 174-amino-acid chain; its full sequence is Photosystem I assembly protein Ycf4 (174 aa).

Helical transmembrane passes span 11–31 and 56–76; these read LSNIFWALTITLGGLGFFLNG and IILMFYGTVALILGLFLCLTI.

It belongs to the Ycf4 family.

The protein localises to the plastid. The protein resides in the chloroplast thylakoid membrane. In terms of biological role, seems to be required for the assembly of the photosystem I complex. This chain is Photosystem I assembly protein Ycf4, found in Emiliania huxleyi (Coccolithophore).